Consider the following 420-residue polypeptide: Interleukin-5 receptor subunit alpha (420 aa).

The first 20 residues, 1–20 (MIIVAHVLLILLGATEILQA), serve as a signal peptide directing secretion. Residues 21–342 (DLLPDEKISL…NDEHKPLREW (322 aa)) lie on the Extracellular side of the membrane. The region spanning 32–123 (PPVNFTIKVT…ASAELHAPPG (92 aa)) is the Fibronectin type-III 1 domain. Asparagine 35 and asparagine 131 each carry an N-linked (GlcNAc...) asparagine glycan. Intrachain disulfides connect cysteine 134-cysteine 155 and cysteine 182-cysteine 196. Asparagine 216 and asparagine 244 each carry an N-linked (GlcNAc...) asparagine glycan. The Fibronectin type-III 2 domain maps to 241-334 (PPLNVTAEIE…WSQPIYVGND (94 aa)). Cysteine 269 and cysteine 316 form a disulfide bridge. The WSXWS motif signature appears at 322–326 (WSEWS). The chain crosses the membrane as a helical span at residues 343–362 (FVIVIMATICFILLILSLIC). The Cytoplasmic portion of the chain corresponds to 363 to 420 (KICHLWIKLFPPIPAPKSNIKDLFVTTNYEKAGSSETEIEVICYIEKPGVETLEDSVF). Residues 371-379 (LFPPIPAPK) carry the Box 1 motif motif.

Belongs to the type I cytokine receptor family. Type 5 subfamily. Interacts with IL5. Interacts with CSF2RB. Interacts with JAK2. Interacts with SDCBP. As to expression, expressed on eosinophils and basophils.

It localises to the membrane. In terms of biological role, cell surface receptor that plays an important role in the survival, differentiation, and chemotaxis of eosinophils. Acts by forming a heterodimeric receptor with CSF2RB subunit and subsequently binding to interleukin-5. In unstimulated conditions, interacts constitutively with JAK2. Heterodimeric receptor activation leads to JAK2 stimulation and subsequent activation of the JAK-STAT pathway. The chain is Interleukin-5 receptor subunit alpha (IL5RA) from Homo sapiens (Human).